The following is a 113-amino-acid chain: Protein translation factor SUI1 homolog (113 aa).

This sequence belongs to the SUI1 family.

Probably involved in translation. The sequence is that of Protein translation factor SUI1 homolog from Salix bakko (Japanese willow).